We begin with the raw amino-acid sequence, 451 residues long: Crh-like protein 2 (451 aa).

An N-terminal signal peptide occupies residues 1 to 21 (MQFNSLVLLAGATILSPFVQA). The GH16 domain maps to 22–241 (QTWTTCNPLN…FTKVPFTMYV (220 aa)). A disulfide bond links Cys-27 and Cys-34. N-linked (GlcNAc...) asparagine glycans are attached at residues Asn-31, Asn-43, Asn-49, and Asn-59. Catalysis depends on Glu-121, which acts as the Nucleophile. Glu-125 acts as the Proton donor in catalysis. Glu-125 is a chitin binding site. N-linked (GlcNAc...) asparagine glycans are attached at residues Asn-130, Asn-143, and Asn-165. 3 residues coordinate chitin: Arg-206, Trp-210, and Thr-222. Residue Asn-273 is glycosylated (N-linked (GlcNAc...) asparagine). The chain crosses the membrane as a helical span at residues 305 to 325 (VYCGGGAAVAALVSAFLFTFL). The N-linked (GlcNAc...) asparagine glycan is linked to Asn-366.

Belongs to the glycosyl hydrolase 16 family. CRH1 subfamily. In terms of assembly, forms homodimers as well as heterodimers with other crh protein members crh1 and crh3. Dimerization may be necessary for the transglycosylation activity.

The protein resides in the membrane. It carries out the reaction Random endo-hydrolysis of N-acetyl-beta-D-glucosaminide (1-&gt;4)-beta-linkages in chitin and chitodextrins.. Its function is as follows. Dual chitinase/transglycosylase that plays a role in cell wall architecture. Chitinase and transglycosylase activities are coupled. Required for the polysaccharide cross-linking at the septa and the cell wall. More specifically, transfers chitin to 1,6-beta-glucan in the cell wall. This is Crh-like protein 2 from Botryotinia fuckeliana (strain B05.10) (Noble rot fungus).